A 423-amino-acid chain; its full sequence is COP9 signalosome complex subunit 3 (423 aa).

The region spanning 197–365 (NFERALYFFE…GMVCFHDNPE (169 aa)) is the PCI domain. The disordered stretch occupies residues 402-423 (QFVQKSMGTQEDDVGSKTSSYS).

The protein belongs to the CSN3 family. In terms of assembly, component of the CSN complex, probably composed of cops1, cops2, cops3, cops4, cops5, cops6, cops7, cops8 and cops9.

Its subcellular location is the cytoplasm. It localises to the nucleus. Component of the COP9 signalosome complex (CSN), a complex involved in various cellular and developmental processes. The CSN complex is an essential regulator of the ubiquitin (Ubl) conjugation pathway by mediating the deneddylation of the cullin subunits of E3 ligase complexes, leading to modify the Ubl ligase activity. In Danio rerio (Zebrafish), this protein is COP9 signalosome complex subunit 3 (cops3).